We begin with the raw amino-acid sequence, 362 residues long: O-methyltransferase 13 (362 aa).

Residues Ser181, Gly205, Asp228, Asp248, and Lys262 each contribute to the S-adenosyl-L-homocysteine site. Asp228 is a binding site for S-adenosyl-L-methionine. The active-site Proton acceptor is the His266.

Belongs to the class I-like SAM-binding methyltransferase superfamily. Cation-independent O-methyltransferase family. Homodimer. In terms of tissue distribution, mainly expressed in vascular and cortical tissues.

The catalysed reaction is dopamine + S-adenosyl-L-methionine = 3-methoxytyramine + S-adenosyl-L-homocysteine + H(+). The protein operates within aromatic compound metabolism. Its pathway is alkaloid biosynthesis. Functionally, O-methyltransferase participating in the biosynthesis of natural products derived from phenylethylamine, including mescaline, a natural hallucinogen potentially used in psychotherapeutic treatments. Catalyzes the O-methylation of dopamine and 4,5-dihydroxy-3-methoxyphenethylamine. This Lophophora williamsii (Peyote) protein is O-methyltransferase 13.